A 715-amino-acid chain; its full sequence is Fatty acid oxidation complex subunit alpha (715 aa).

The interval 1–190 (MIYEGKAITV…KVSAVDAVVT (190 aa)) is enoyl-CoA hydratase/isomerase. Aspartate 297 provides a ligand contact to substrate. Residues 312–715 (KDVKQAAVLG…MAKNGQSFFG (404 aa)) are 3-hydroxyacyl-CoA dehydrogenase. NAD(+)-binding positions include methionine 325, aspartate 344, 401–403 (VVE), lysine 408, and serine 430. Histidine 451 (for 3-hydroxyacyl-CoA dehydrogenase activity) is an active-site residue. An NAD(+)-binding site is contributed by asparagine 454. Residues asparagine 501 and tyrosine 660 each coordinate substrate.

The protein in the N-terminal section; belongs to the enoyl-CoA hydratase/isomerase family. In the C-terminal section; belongs to the 3-hydroxyacyl-CoA dehydrogenase family. As to quaternary structure, heterotetramer of two alpha chains (FadB) and two beta chains (FadA).

The catalysed reaction is a (3S)-3-hydroxyacyl-CoA + NAD(+) = a 3-oxoacyl-CoA + NADH + H(+). The enzyme catalyses a (3S)-3-hydroxyacyl-CoA = a (2E)-enoyl-CoA + H2O. It carries out the reaction a 4-saturated-(3S)-3-hydroxyacyl-CoA = a (3E)-enoyl-CoA + H2O. It catalyses the reaction (3S)-3-hydroxybutanoyl-CoA = (3R)-3-hydroxybutanoyl-CoA. The catalysed reaction is a (3Z)-enoyl-CoA = a 4-saturated (2E)-enoyl-CoA. The enzyme catalyses a (3E)-enoyl-CoA = a 4-saturated (2E)-enoyl-CoA. The protein operates within lipid metabolism; fatty acid beta-oxidation. In terms of biological role, involved in the aerobic and anaerobic degradation of long-chain fatty acids via beta-oxidation cycle. Catalyzes the formation of 3-oxoacyl-CoA from enoyl-CoA via L-3-hydroxyacyl-CoA. It can also use D-3-hydroxyacyl-CoA and cis-3-enoyl-CoA as substrate. The protein is Fatty acid oxidation complex subunit alpha of Pseudomonas fragi.